We begin with the raw amino-acid sequence, 428 residues long: Ribosome biogenesis protein WDR12 homolog (428 aa).

Residues 13–97 (LQVHFTTKQK…EDTIELEYVE (85 aa)) are ubiquitin-like (UBL) domain. WD repeat units follow at residues 109 to 146 (LHDDWVSAVQAKDGWILTGTYDNTVNLWNTKGKHKLTI), 148 to 190 (GHVA…NTAE), 197 to 236 (GHERGVGCIAVNPAKTQMASGSMDTMLKIWSTELQADKGE), 259 to 297 (GHREFVSGVQWIDNTTIATCSWDHTIKLWDLSMGGIKTE), 299 to 338 (TGNKSFFDLSYSPLNGMIITASPDKNLRLYDPRSKHGNFV), 344 to 384 (GHSQ…APIF), and 388 to 426 (GHEDKVLACDWSNPKYILSGGSDNAVRVFKSRIAVDNTK).

Belongs to the WD repeat WDR12/YTM1 family.

It is found in the nucleus. The protein resides in the nucleolus. Its subcellular location is the nucleoplasm. Functionally, required for maturation of ribosomal RNAs and formation of the large ribosomal subunit. The polypeptide is Ribosome biogenesis protein WDR12 homolog (Anopheles gambiae (African malaria mosquito)).